The sequence spans 184 residues: Protein FAM89A (184 aa).

The segment at 148–184 (YFQEQNSLHDRRDRGPPRDLSLPVSSLSSSDWILESI) is disordered. Residues 154 to 164 (SLHDRRDRGPP) show a composition bias toward basic and acidic residues. Low complexity predominate over residues 167–184 (LSLPVSSLSSSDWILESI).

The protein belongs to the FAM89 family.

The sequence is that of Protein FAM89A (FAM89A) from Homo sapiens (Human).